Reading from the N-terminus, the 256-residue chain is Matrix protein (256 aa).

An interaction with M2-1 region spans residues Met-1–Cys-110. A nuclear targeting and binding to host importin KPNB1 region spans residues Cys-110–Thr-183. The short motif at Ile-194–Val-206 is the Nuclear export signal element. Residue Thr-205 is modified to Phosphothreonine; by host CK2.

It belongs to the pneumovirinae M protein family. Forms dimers. Forms higher-order oligomers. Interacts with glycoprotein G (via N-terminus). Interacts with protein M2-1; this interaction directs the matrix protein localization to cytoplasmic inclusions comprising viral proteins L, N, P, and M2-1 and mediates the matrix protein association with the nucleocapsid. Interacts with host importin KPNB1; this interaction mediates nuclear import of the matrix protein early during infection. Interacts with host AP3M1; this interaction plays an essential role in trafficking the matrix protein in host cells. Interacts with host CAV1; this interaction probably facilitates viral budding. Interacts with host CFL1; this interaction probably facilitates viral replication. Interacts with host ZNF502; this interaction probably facilitates viral release. Interacts with host RACK1. Phosphorylation is important for oligomerization.

The protein localises to the virion. It localises to the host cytoplasm. Its subcellular location is the host nucleus. It is found in the host cell membrane. Plays a crucial role in virus assembly into filaments and budding. Early in infection, localizes in the nucleus where it inhibits host cell transcription through direct binding to host chromatin. Later in infection, traffics to the cytoplasm through the action of host CRM1 to associate with inclusion bodies, the site of viral transcription and replication. During virus assembly and budding, acts as a bridge between the nucleocapsid and the lipid bilayer. Also plays a role in the inhibition of host interferon-beta response in a RACK1-dependent manner. The protein is Matrix protein (M) of Homo sapiens (Human).